Here is a 616-residue protein sequence, read N- to C-terminus: UvrABC system protein C (616 aa).

The region spanning 21–99 is the GIY-YIG domain; it reads HQPGVYRMYD…IKLYLPKYNV (79 aa). Residues 209 to 244 form the UVR domain; it reads RQVIASLVEKMEQASQSLNFEQAATFRDQIQALRRV.

The protein belongs to the UvrC family. Interacts with UvrB in an incision complex.

The protein resides in the cytoplasm. Its function is as follows. The UvrABC repair system catalyzes the recognition and processing of DNA lesions. UvrC both incises the 5' and 3' sides of the lesion. The N-terminal half is responsible for the 3' incision and the C-terminal half is responsible for the 5' incision. This chain is UvrABC system protein C, found in Photobacterium profundum (strain SS9).